A 296-amino-acid chain; its full sequence is Thioredoxin-related transmembrane protein 2 (296 aa).

An N-terminal signal peptide occupies residues 1–48 (MAVLAPLIALVYSVPRLSRWLAQPYYLLSALLSAAFLLVRKLPPLCHG). Residues 49–102 (LPTQREDGNPCDFDWREVEILMFLSAIVMMKNRRSITVEQHIGNIFMFSKVANA) lie on the Extracellular side of the membrane. The helical transmembrane segment at 103-125 (ILFFRLDIRMGLLYITLCIVFLM) threads the bilayer. Positions 114-270 (LLYITLCIVF…YQRAKKPSKA (157 aa)) constitute a Thioredoxin domain. Over 126–296 (TCEPPLYMGP…VSDGENKKDK (171 aa)) the chain is Cytoplasmic. Serine 211, serine 243, and serine 288 each carry phosphoserine. The tract at residues 266–296 (KPSKAGDSIPEEQPVASAPTTVSDGENKKDK) is disordered. The short motif at 293–296 (KKDK) is the Di-lysine motif element.

Monomer. Homodimer; disulfide-linked. Occurs in both reduced and oxidized monomeric form. Oxidative conditions increase homodimerization. Interacts with CANX. Interacts with ATP2A2.

The protein localises to the endoplasmic reticulum membrane. Its subcellular location is the mitochondrion membrane. Its function is as follows. Endoplasmic reticulum and mitochondria-associated protein that probably functions as a regulator of cellular redox state and thereby regulates protein post-translational modification, protein folding and mitochondrial activity. Indirectly regulates neuronal proliferation, migration, and organization in the developing brain. In Pongo abelii (Sumatran orangutan), this protein is Thioredoxin-related transmembrane protein 2 (TMX2).